The following is a 226-amino-acid chain: GTP-binding nuclear protein Ran-3 (226 aa).

Residues 14–178 (GYPSFKLILV…LYLARKLTGD (165 aa)) enclose the Small GTPase Ran-type domain. 25-32 (DGGTGKTT) serves as a coordination point for GTP. A switch-I region spans residues 44–52 (KRYEPTIGV). Residues Gly75, 129–132 (NKVD), and 157–159 (SAK) each bind GTP. A switch-II region spans residues 75–91 (GQEKFGGLRDGYYIHGH).

This sequence belongs to the small GTPase superfamily. Ran family. As to quaternary structure, found in a nuclear export complex with RanGTP, exportin and pre-miRNA.

The protein localises to the nucleus. Its function is as follows. GTP-binding protein involved in nucleocytoplasmic transport. Required for the import of protein into the nucleus and also for RNA export. Involved in chromatin condensation and control of cell cycle. The polypeptide is GTP-binding nuclear protein Ran-3 (RAN3) (Oryza sativa subsp. indica (Rice)).